We begin with the raw amino-acid sequence, 283 residues long: Urease accessory protein UreD (283 aa).

Belongs to the UreD family. UreD, UreF and UreG form a complex that acts as a GTP-hydrolysis-dependent molecular chaperone, activating the urease apoprotein by helping to assemble the nickel containing metallocenter of UreC. The UreE protein probably delivers the nickel.

The protein localises to the cytoplasm. Its function is as follows. Required for maturation of urease via the functional incorporation of the urease nickel metallocenter. The sequence is that of Urease accessory protein UreD from Rhodopseudomonas palustris (strain BisB5).